A 307-amino-acid polypeptide reads, in one-letter code: 4-diphosphocytidyl-2-C-methyl-D-erythritol kinase (307 aa).

The active site involves lysine 9. Position 94–104 (94–104) interacts with ATP; the sequence is PIGAGLAGGSS. Aspartate 136 is an active-site residue.

It belongs to the GHMP kinase family. IspE subfamily.

It carries out the reaction 4-CDP-2-C-methyl-D-erythritol + ATP = 4-CDP-2-C-methyl-D-erythritol 2-phosphate + ADP + H(+). Its pathway is isoprenoid biosynthesis; isopentenyl diphosphate biosynthesis via DXP pathway; isopentenyl diphosphate from 1-deoxy-D-xylulose 5-phosphate: step 3/6. Its function is as follows. Catalyzes the phosphorylation of the position 2 hydroxy group of 4-diphosphocytidyl-2C-methyl-D-erythritol. This Synechococcus sp. (strain CC9605) protein is 4-diphosphocytidyl-2-C-methyl-D-erythritol kinase.